The following is a 217-amino-acid chain: MGQKVHPIGMRVGIIRDWDAKWYAEKEYADYLHEDLAIRKFVQKELADAAVSTIEIERAVNKVNVSLHTAKPGMVIGKGGANVDALRAKLNKLTGKQVHINIIEIKSPDLDAHLVGEGIARQLEQRVAFRRAQKQAIQRTMRAGAKGIKTQVSGRLNGADIARSEGYSEGTVPLHTLRADIDYAWEEADTTYGKLGVKVWIYRGEILPARKNTKGGK.

The 69-residue stretch at 38–106 (IRKFVQKELA…QVHINIIEIK (69 aa)) folds into the KH type-2 domain.

Belongs to the universal ribosomal protein uS3 family. Part of the 30S ribosomal subunit. Forms a tight complex with proteins S10 and S14.

Binds the lower part of the 30S subunit head. Binds mRNA in the 70S ribosome, positioning it for translation. This Streptococcus gordonii (strain Challis / ATCC 35105 / BCRC 15272 / CH1 / DL1 / V288) protein is Small ribosomal subunit protein uS3.